The following is a 143-amino-acid chain: UPF0201 protein Pars_1985 (143 aa).

Belongs to the UPF0201 family.

The protein is UPF0201 protein Pars_1985 of Pyrobaculum arsenaticum (strain DSM 13514 / JCM 11321 / PZ6).